The sequence spans 930 residues: Isoleucine--tRNA ligase (930 aa).

Positions 57–67 (PYANGNIHVGH) match the 'HIGH' region motif. Position 554 (glutamate 554) interacts with L-isoleucyl-5'-AMP. The 'KMSKS' region motif lies at 595–599 (KMSKS). Position 598 (lysine 598) interacts with ATP. Cysteine 888, cysteine 891, cysteine 908, and cysteine 911 together coordinate Zn(2+).

The protein belongs to the class-I aminoacyl-tRNA synthetase family. IleS type 1 subfamily. As to quaternary structure, monomer. The cofactor is Zn(2+).

It localises to the cytoplasm. It catalyses the reaction tRNA(Ile) + L-isoleucine + ATP = L-isoleucyl-tRNA(Ile) + AMP + diphosphate. Catalyzes the attachment of isoleucine to tRNA(Ile). As IleRS can inadvertently accommodate and process structurally similar amino acids such as valine, to avoid such errors it has two additional distinct tRNA(Ile)-dependent editing activities. One activity is designated as 'pretransfer' editing and involves the hydrolysis of activated Val-AMP. The other activity is designated 'posttransfer' editing and involves deacylation of mischarged Val-tRNA(Ile). This Streptococcus pneumoniae (strain Taiwan19F-14) protein is Isoleucine--tRNA ligase.